A 411-amino-acid chain; its full sequence is Flagellum-associated coiled-coil domain-containing protein 1 (411 aa).

Residues 52–77 (SQPAKSTAFPRDKAQSRKLEESNKAP) are disordered. Residues 61–74 (PRDKAQSRKLEESN) show a composition bias toward basic and acidic residues. Coiled-coil stretches lie at residues 124 to 220 (SDII…LKNM) and 278 to 328 (NESF…VVLE). K353 carries the N6-acetyllysine modification. Residues 355-385 (FQTKLAEAEEKYKSTIQVLTEENNSLRQKVL) adopt a coiled-coil conformation.

It localises to the cytoplasm. It is found in the cytoplasmic granule. The protein localises to the cell projection. The protein resides in the cilium. Its subcellular location is the flagellum. This Rattus norvegicus (Rat) protein is Flagellum-associated coiled-coil domain-containing protein 1.